A 586-amino-acid polypeptide reads, in one-letter code: Switch-associated protein 70 (586 aa).

Residues 210-306 form the PH domain; the sequence is DVLKQGYMLK…WIQAIQTTVS (97 aa). A coiled-coil region spans residues 316–538; the sequence is HKEARQKRKE…NNTRSWKDKV (223 aa).

In terms of assembly, the SWAP complex consists of NPM1, NCL, PARP1 and SWAP70. Post-translationally, tyrosine-phosphorylated.

The protein localises to the cytoplasm. It is found in the cell membrane. The protein resides in the nucleus. It localises to the cell projection. Its subcellular location is the lamellipodium. In terms of biological role, phosphatidylinositol 3,4,5-trisphosphate-dependent guanine nucleotide exchange factor (GEF) which, independently of RAS, transduces signals from tyrosine kinase receptors to RAC. It also mediates signaling of membrane ruffling. Regulates the actin cytoskeleton as an effector or adapter protein in response to agonist stimulated phosphatidylinositol (3,4)-bisphosphate production and cell protrusion. This is Switch-associated protein 70 (SWAP70) from Gallus gallus (Chicken).